A 523-amino-acid chain; its full sequence is MSNRVIIFDTTLRDGEQALAASLTVKEKLQIALALERLGVDVMEVGFPVSSPGDFESVQTIAKTIKNSRVCALSRALEKDIDAAAQALSVAEQFRIHTFISTSTIHVESKLKRSFDQVLEMAVGAVKYARRFTDDVEFSCEDAGRTPIDNLCRMVEEAIKAGARTINIPDTVGYTVPSEFGGIIQTLFNRVPNIDQAVISVHCHDDLGLSVANSITAVQHGARQIECTVNGIGERAGNCSLEEIAMILSTRKGELGLETGINAKEIHRTSSLVSQLCNMPVQANKAIVGANAFTHSSGIHQDGMLKAQNTYEIMTPESIGLNRNNLNMTSRSGRHVIKHRMSELGYGEQDYNMDVLYEEFLTLADKKGQVFDYDLEALAFMEAQAETDDHYKLQQLVVHSDSTEGSATATVKVAVNGETITEAATGNGPVDAAYKAVARASGCEINISSYQLSAKGEGQNALGQVDITAKYREQNFHGVGLATDVVEASAKALVHVMNLTWRADKVADCKQRIQQNKRELGGV.

The region spanning 5-267 (VIIFDTTLRD…ETGINAKEIH (263 aa)) is the Pyruvate carboxyltransferase domain. Mn(2+) contacts are provided by Asp-14, His-202, His-204, and Asn-238. The regulatory domain stretch occupies residues 392 to 523 (KLQQLVVHSD…QQNKRELGGV (132 aa)).

Belongs to the alpha-IPM synthase/homocitrate synthase family. LeuA type 1 subfamily. As to quaternary structure, homodimer. Mn(2+) serves as cofactor.

The protein resides in the cytoplasm. It catalyses the reaction 3-methyl-2-oxobutanoate + acetyl-CoA + H2O = (2S)-2-isopropylmalate + CoA + H(+). It functions in the pathway amino-acid biosynthesis; L-leucine biosynthesis; L-leucine from 3-methyl-2-oxobutanoate: step 1/4. Functionally, catalyzes the condensation of the acetyl group of acetyl-CoA with 3-methyl-2-oxobutanoate (2-ketoisovalerate) to form 3-carboxy-3-hydroxy-4-methylpentanoate (2-isopropylmalate). This is 2-isopropylmalate synthase from Shewanella pealeana (strain ATCC 700345 / ANG-SQ1).